A 112-amino-acid chain; its full sequence is Nucleoid-associated protein lpp2803 (112 aa).

Belongs to the YbaB/EbfC family. Homodimer.

The protein resides in the cytoplasm. The protein localises to the nucleoid. Its function is as follows. Binds to DNA and alters its conformation. May be involved in regulation of gene expression, nucleoid organization and DNA protection. The polypeptide is Nucleoid-associated protein lpp2803 (Legionella pneumophila (strain Paris)).